The primary structure comprises 382 residues: RNA exonuclease 3 (382 aa).

Residues 223–369 (VLALDCEMAY…EDAIAAMDVV (147 aa)) form the Exonuclease domain.

Belongs to the REXO1/REXO3 family.

It is found in the cytoplasm. It localises to the nucleus. Its function is as follows. 3' to 5' exoribonuclease required for proper 3' end maturation of MRP RNA and of the U5L snRNA. This Eremothecium gossypii (strain ATCC 10895 / CBS 109.51 / FGSC 9923 / NRRL Y-1056) (Yeast) protein is RNA exonuclease 3 (REX3).